The following is a 212-amino-acid chain: MAKNYYEITLALAGICQSAHVVQQLAHTGHCNNDVLHTSLNSVLNLNPSSTLAVYGNDEQNLKVGLETLLGILNTSSNKGAGAELSRYAFSLIALERKLKAKPAALDELGKRIGQLERQLEHFDLLSETIVSALAAIYVDVISTLGPRIQVTGSPEVLKNSQVQAKVRSALLAGIRSAVLWQQIGGGRLQLMFSRGQLVKEAKQILARCPSV.

This sequence belongs to the HflD family.

It localises to the cytoplasm. It is found in the cell inner membrane. This is High frequency lysogenization protein HflD homolog from Pectobacterium carotovorum subsp. carotovorum (strain PC1).